Consider the following 332-residue polypeptide: 2,3-diketo-L-gulonate reductase (332 aa).

His44 serves as the catalytic Proton donor. Residues Ile168–Ser174, Trp224–Lys225, and Gly304–Glu306 contribute to the NAD(+) site.

This sequence belongs to the LDH2/MDH2 oxidoreductase family. DlgD subfamily. As to quaternary structure, homodimer.

It localises to the cytoplasm. It carries out the reaction 3-dehydro-L-gulonate + NAD(+) = 2,3-dioxo-L-gulonate + NADH + H(+). The catalysed reaction is 3-dehydro-L-gulonate + NADP(+) = 2,3-dioxo-L-gulonate + NADPH + H(+). Functionally, catalyzes the reduction of 2,3-diketo-L-gulonate in the presence of NADH, to form 3-keto-L-gulonate. This chain is 2,3-diketo-L-gulonate reductase, found in Escherichia coli O81 (strain ED1a).